Here is a 437-residue protein sequence, read N- to C-terminus: UDP-N-acetylmuramate--L-alanine ligase (437 aa).

108–114 (GAHGKTS) provides a ligand contact to ATP.

The protein belongs to the MurCDEF family.

It localises to the cytoplasm. The enzyme catalyses UDP-N-acetyl-alpha-D-muramate + L-alanine + ATP = UDP-N-acetyl-alpha-D-muramoyl-L-alanine + ADP + phosphate + H(+). Its pathway is cell wall biogenesis; peptidoglycan biosynthesis. In terms of biological role, cell wall formation. This Staphylococcus haemolyticus (strain JCSC1435) protein is UDP-N-acetylmuramate--L-alanine ligase.